Here is a 393-residue protein sequence, read N- to C-terminus: MKIFLCLIAVVFLQGVVGFHVEREYAWKNISYEGVDPALFNIDNIIPTGFVHDAINKKIFIAVPRRSPQIPFTLTELDTTKHPERSPPLSKFPGSDKLINVYQPVIDECRRLWIADVGRVDYKGDEQKYPNQNAVLIAYDLTKENYPEIHRYEIPSKIAGSNTIPFGGFAVDVTNPKEGCGKTFVYITNFEDNTLIVYDQEKKDSWKISHGSFKPEHDSTLSHDGKQYKYRVGLFGITLGDRDPEGNRPAYYIAGSSTKLFEISTKILKEKGAKFDPVNLGNRGPHTEAVALVYDPKTKVIFFAESDSRQVSCWNTQKPLNHKNTDVIFASAKFIYGSDISVDSESQLWFLSTGHPPIPNLKLTFDKPHIRLMRVDTAKAIRRTRCEVKPRKP.

The N-terminal stretch at methionine 1–glycine 18 is a signal peptide. An N-linked (GlcNAc...) asparagine glycan is attached at asparagine 29.

This sequence belongs to the major royal jelly protein family. As to expression, female salivary gland (at protein level).

It is found in the secreted. In terms of biological role, probably modulates blood feeding of sand flies on vertebrate species by binding and sequestering different mediators involved in the host response. Binds biogenic amines. Binds serotonin with high affinity. Poorly binds histamine. Does not bind dopamine, noradrenaline, adrenaline and octopamine. The chain is Yellow-related salivary protein SP03B from Phlebotomus perniciosus (Phlebotomine sand fly).